A 434-amino-acid polypeptide reads, in one-letter code: D-amino acid dehydrogenase (434 aa).

3 to 17 (VVILGSGVVGVASAW) is a binding site for FAD.

It belongs to the DadA oxidoreductase family. It depends on FAD as a cofactor.

The catalysed reaction is a D-alpha-amino acid + A + H2O = a 2-oxocarboxylate + AH2 + NH4(+). Its pathway is amino-acid degradation; D-alanine degradation; NH(3) and pyruvate from D-alanine: step 1/1. Functionally, oxidative deamination of D-amino acids. This is D-amino acid dehydrogenase from Serratia proteamaculans (strain 568).